Reading from the N-terminus, the 455-residue chain is Phosphoglucosamine mutase (455 aa).

Ser-107 acts as the Phosphoserine intermediate in catalysis. Mg(2+)-binding residues include Ser-107, Asp-247, Asp-249, and Asp-251. Ser-107 carries the phosphoserine modification.

It belongs to the phosphohexose mutase family. Requires Mg(2+) as cofactor. In terms of processing, activated by phosphorylation.

It catalyses the reaction alpha-D-glucosamine 1-phosphate = D-glucosamine 6-phosphate. Catalyzes the conversion of glucosamine-6-phosphate to glucosamine-1-phosphate. This is Phosphoglucosamine mutase from Leuconostoc citreum (strain KM20).